A 73-amino-acid chain; its full sequence is Antimicrobial peptide TsAP-1 (73 aa).

Positions 1 to 22 (MQIKHLITLFFLVLIVADQCSA) are cleaved as a signal peptide. K39 bears the Lysine amide mark. The propeptide occupies 45 to 73 (EISAQIEQYKDLQKREAELEELLDRLPMY).

As to expression, expressed by the venom gland.

Its subcellular location is the secreted. In terms of biological role, has a low antimicrobial activity against S.aureus, E.coli, and C.albicans (MICs 120-160 uM). Has a low hemolytic activity (4% at 160 uM). Also inhibits the growth of two cancer cell lines on a total of five (the squamous carcinoma cell line H157 (IC(50)=55.9 uM) and the lung adenocarcinoma cell line H838 (IC(50)=52.5 uM)). In Tityus serrulatus (Brazilian scorpion), this protein is Antimicrobial peptide TsAP-1.